Here is a 541-residue protein sequence, read N- to C-terminus: MHPEFAPVAFLSAASLALPLPWHWRAGNVATLSIIAWLFIMNMIYGINAVIWAGSARITAVVYCDITTKLTIGGNFALPAACLCLCIHLERVASVRAAQTTAADKRRRTIFELAMCWLLPIIFMALHYVVQGHRFDIVEDFGCRPATYYSIPAIFIVWVPPLTMAAASLVYASLAIRHFMHRRLSFAMHLQARSSALTTSRYLRLILMAIVQLVWLVVTTAYTLWFSSMTLNLRPWTTWADVHSNFGRIQTWPAIITPAVILRGACTLWWMVPASTWIFVAFFAFGNDAVEEYKRVLNVVLSGARRALPEGFLSEKKRDLKGFSLPSFVKGSVPLGDSSSSTRKDSLPDKAVLPVNRSVTMTTTTSTVVSSMPPPYSLPPPPPPQKYTSPLDSLDYSADADRISISSSVDTSGYTIEILPETPSTSSSTPPSPSSPQYPRSPSSQGSHVVDDYYYTSSPQDSLPHDIPAPPSLPPPTHMPDEAHISPSHAVPSRPPAFPPYPFARDMRPAASEPMSPRPITYPSMSPTHRDIASVFPGGRR.

Residues 1–3 (MHP) are Extracellular-facing. A helical transmembrane segment spans residues 4-24 (EFAPVAFLSAASLALPLPWHW). The Cytoplasmic segment spans residues 25–33 (RAGNVATLS). A helical membrane pass occupies residues 34 to 54 (IIAWLFIMNMIYGINAVIWAG). The Extracellular segment spans residues 55–69 (SARITAVVYCDITTK). The chain crosses the membrane as a helical span at residues 70-90 (LTIGGNFALPAACLCLCIHLE). Residues 91-109 (RVASVRAAQTTAADKRRRT) are Cytoplasmic-facing. Residues 110–130 (IFELAMCWLLPIIFMALHYVV) traverse the membrane as a helical segment. At 131 to 150 (QGHRFDIVEDFGCRPATYYS) the chain is on the extracellular side. A helical membrane pass occupies residues 151 to 171 (IPAIFIVWVPPLTMAAASLVY). Residues 172 to 205 (ASLAIRHFMHRRLSFAMHLQARSSALTTSRYLRL) are Cytoplasmic-facing. A helical transmembrane segment spans residues 206–226 (ILMAIVQLVWLVVTTAYTLWF). The Extracellular portion of the chain corresponds to 227-264 (SSMTLNLRPWTTWADVHSNFGRIQTWPAIITPAVILRG). The helical transmembrane segment at 265-285 (ACTLWWMVPASTWIFVAFFAF) threads the bilayer. Residues 286–541 (GNDAVEEYKR…IASVFPGGRR (256 aa)) lie on the Cytoplasmic side of the membrane. Disordered regions lie at residues 364–393 (TTSTVVSSMPPPYSLPPPPPPQKYTSPLDS) and 414–541 (YTIE…GGRR). The span at 372–385 (MPPPYSLPPPPPPQ) shows a compositional bias: pro residues. Positions 420–429 (PETPSTSSST) are enriched in low complexity. Composition is skewed to pro residues over residues 467 to 478 (IPAPPSLPPPTH) and 493 to 502 (SRPPAFPPYP).

It belongs to the G-protein coupled receptor 4 family.

It localises to the membrane. In terms of biological role, receptor for the BBP1 pheromone, a prenylated mating factor. The protein is Pheromone B beta 1 receptor (BBR1) of Schizophyllum commune (Split gill fungus).